A 180-amino-acid polypeptide reads, in one-letter code: Hypoxanthine-guanine phosphoribosyltransferase (180 aa).

Diphosphate contacts are provided by K43 and G44. Mg(2+)-binding residues include E99 and D100. Catalysis depends on D103, which acts as the Proton acceptor. GMP-binding positions include K131, 152–153 (FV), and D159. R165 serves as a coordination point for diphosphate.

It belongs to the purine/pyrimidine phosphoribosyltransferase family. Mg(2+) serves as cofactor.

It localises to the cytoplasm. It carries out the reaction IMP + diphosphate = hypoxanthine + 5-phospho-alpha-D-ribose 1-diphosphate. The catalysed reaction is GMP + diphosphate = guanine + 5-phospho-alpha-D-ribose 1-diphosphate. Its pathway is purine metabolism; IMP biosynthesis via salvage pathway; IMP from hypoxanthine: step 1/1. It participates in purine metabolism; GMP biosynthesis via salvage pathway; GMP from guanine: step 1/1. In terms of biological role, purine salvage pathway enzyme that catalyzes the transfer of the ribosyl-5-phosphate group from 5-phospho-alpha-D-ribose 1-diphosphate (PRPP) to the N9 position of the 6-oxopurines hypoxanthine and guanine to form the corresponding ribonucleotides IMP (inosine 5'-monophosphate) and GMP (guanosine 5'-monophosphate), with the release of PPi. The protein is Hypoxanthine-guanine phosphoribosyltransferase (hpt) of Streptococcus pneumoniae serotype 4 (strain ATCC BAA-334 / TIGR4).